A 101-amino-acid polypeptide reads, in one-letter code: uncharacterized protein (101 aa).

A disordered region spans residues 76–101 (KGNVTRRRKKTHLGNDDGKKEAQEKM). Basic and acidic residues predominate over residues 88-101 (LGNDDGKKEAQEKM).

This is an uncharacterized protein from Homo sapiens (Human).